Reading from the N-terminus, the 897-residue chain is Serine/threonine-protein kinase ATG1 (897 aa).

In terms of domain architecture, Protein kinase spans Y24–V325. Residues I30–V38 and K54 each bind ATP. S34 carries the phosphoserine modification. T129 carries the phosphothreonine modification. The Proton acceptor role is filled by D172. T226 carries the post-translational modification Phosphothreonine; by autocatalysis. A phosphoserine mark is found at S304, S365, and S390. The LIR signature appears at Y429–V432. The segment at L490 to L509 is disordered. A phosphoserine; by PKA mark is found at S508 and S515. Residues S533, S551, and S552 each carry the phosphoserine modification. A Phosphothreonine modification is found at T590. A phosphoserine mark is found at S621, S635, S638, S647, S677, S680, S683, S769, and S783. The required for Cvt trafficking stretch occupies residues D880–L886.

Belongs to the protein kinase superfamily. Ser/Thr protein kinase family. APG1/unc-51/ULK1 subfamily. In terms of assembly, homodimer. Dimerization requires the presence of ATG13. Forms a ternary complex with ATG13 and ATG17. Also interacts with ATG11. Post-translationally, autophosphorylated at Thr-226 and Ser-390. The phosphorylation state may play a role in the induction of protein degradation upon starvation. Phosphorylation at Thr-226 within the activation loop is required for protein kinase activity whereas phosphorylation at Ser-34 leads to inhibition of kinase activity. Phosphorylation of Ser-508 and Ser-515 by PKA is required to induce autophagy but not for kinase activity.

It is found in the cytoplasm. Its subcellular location is the preautophagosomal structure membrane. It carries out the reaction L-seryl-[protein] + ATP = O-phospho-L-seryl-[protein] + ADP + H(+). The enzyme catalyses L-threonyl-[protein] + ATP = O-phospho-L-threonyl-[protein] + ADP + H(+). Activated by hypophosphorylated form of ATG13 (present in nitrogen starvation conditions). Also activated by autophopsphorylation of Thr-226 and inhibited by phosphorylation of Ser-34. In terms of biological role, serine/threonine protein kinase involved in the cytoplasm to vacuole transport (Cvt) and found to be essential in autophagy, where it is required for the formation of autophagosomes. Involved in the clearance of protein aggregates which cannot be efficiently cleared by the proteasome. Required for selective autophagic degradation of the nucleus (nucleophagy) as well as for mitophagy which contributes to regulate mitochondrial quantity and quality by eliminating the mitochondria to a basal level to fulfill cellular energy requirements and preventing excess ROS production. Also involved in endoplasmic reticulum-specific autophagic process, in selective removal of ER-associated degradation (ERAD) substrates. Plays a key role in ATG9 and ATG23 cycling through the pre-autophagosomal structure and is necessary to promote ATG18 binding to ATG9 through phosphorylation of ATG9. Catalyzes phosphorylation of ATG4, decreasing the interaction between ATG4 and ATG8 and impairing deconjugation of PE-conjugated forms of ATG8. Finally, ATG1 is also required for the maintenance of cell viability under starvation and for glycogen storage during stationary phase. Plays a role in genome stability through suppression of abnormal mitosis under starvation, and in regulation of filamentous growth. The protein is Serine/threonine-protein kinase ATG1 of Saccharomyces cerevisiae (strain YJM789) (Baker's yeast).